A 473-amino-acid chain; its full sequence is LETM1 domain-containing protein mdm28, mitochondrial (473 aa).

The N-terminal 73 residues, 1–73 (MLRNRLFKTP…FYNIGSSRLY (73 aa)), are a transit peptide targeting the mitochondrion. The Mitochondrial intermembrane portion of the chain corresponds to 74 to 161 (STETPTPSKV…LTRTLKDIGR (88 aa)). A helical transmembrane segment spans residues 162–182 (LVPFSVFVVVPFAELLLPIAV). Residues 183-473 (KLFPNLLPST…ESNIPKNERK (291 aa)) are Mitochondrial matrix-facing. In terms of domain architecture, Letm1 RBD spans 205 to 398 (QLRKTRNEVS…LQDTLASIPD (194 aa)). The interval 430 to 473 (EEEAEHVAEHPDLAKKQTEENKATSKPAVSAKSPESNIPKNERK) is disordered. Residues 434–452 (EHVAEHPDLAKKQTEENKA) show a composition bias toward basic and acidic residues. The span at 462-473 (SPESNIPKNERK) shows a compositional bias: polar residues.

It localises to the mitochondrion inner membrane. In terms of biological role, involved in mitochondrial potassium homeostasis through the mitochondrial K(+)/H(+) exchange regulation. The sequence is that of LETM1 domain-containing protein mdm28, mitochondrial (mdm28) from Schizosaccharomyces pombe (strain 972 / ATCC 24843) (Fission yeast).